Here is a 264-residue protein sequence, read N- to C-terminus: MSVATYQERAAKHPSPVASKLLNLMHEKKTNLCASLDVNTTEELLKLVDTLGPYICLLKTHIDIISDFSIDGTVKPLKELAKKHNFMIFEDRKFADIGNTVKLQYSSGVYRIAEWADITNAHGVTGAGIVTGLKQAAQETTNEPRGLLMLAELSSKGSLAHGEYTQGTVEIAKTDKDFVIGFIAQRDMGGREEGYDWLIMTPGVGLDDKGDALGQQYRTVDEVVSTGSDIIIVGRGLFAKGRDPRVEGERYRKAGWEAYEKRCQ.

Residues Asp-37, 59–61 (KTH), 91–100 (DRKFADIGNT), Tyr-217, and Arg-235 each bind substrate. Lys-93 acts as the Proton donor in catalysis.

It belongs to the OMP decarboxylase family.

The enzyme catalyses orotidine 5'-phosphate + H(+) = UMP + CO2. Its pathway is pyrimidine metabolism; UMP biosynthesis via de novo pathway; UMP from orotate: step 2/2. This chain is Orotidine 5'-phosphate decarboxylase (URA3), found in Torulaspora delbrueckii (Yeast).